The primary structure comprises 213 residues: Phosphatidylserine decarboxylase proenzyme (213 aa).

Catalysis depends on Ser-182, which acts as the Schiff-base intermediate with substrate; via pyruvic acid. Ser-182 bears the Pyruvic acid (Ser); by autocatalysis mark.

The protein belongs to the phosphatidylserine decarboxylase family. PSD-A subfamily. Heterodimer of a large membrane-associated beta subunit and a small pyruvoyl-containing alpha subunit. Pyruvate serves as cofactor. In terms of processing, is synthesized initially as an inactive proenzyme. Formation of the active enzyme involves a self-maturation process in which the active site pyruvoyl group is generated from an internal serine residue via an autocatalytic post-translational modification. Two non-identical subunits are generated from the proenzyme in this reaction, and the pyruvate is formed at the N-terminus of the alpha chain, which is derived from the carboxyl end of the proenzyme. The post-translation cleavage follows an unusual pathway, termed non-hydrolytic serinolysis, in which the side chain hydroxyl group of the serine supplies its oxygen atom to form the C-terminus of the beta chain, while the remainder of the serine residue undergoes an oxidative deamination to produce ammonia and the pyruvoyl prosthetic group on the alpha chain.

Its subcellular location is the cell membrane. The catalysed reaction is a 1,2-diacyl-sn-glycero-3-phospho-L-serine + H(+) = a 1,2-diacyl-sn-glycero-3-phosphoethanolamine + CO2. It functions in the pathway phospholipid metabolism; phosphatidylethanolamine biosynthesis; phosphatidylethanolamine from CDP-diacylglycerol: step 2/2. In terms of biological role, catalyzes the formation of phosphatidylethanolamine (PtdEtn) from phosphatidylserine (PtdSer). The sequence is that of Phosphatidylserine decarboxylase proenzyme from Geotalea uraniireducens (strain Rf4) (Geobacter uraniireducens).